The sequence spans 240 residues: RNA transcription, translation and transport factor protein (240 aa).

This sequence belongs to the RTRAF family. As to quaternary structure, homodimer. Component of a tRNA-splicing ligase complex.

The protein resides in the nucleus. Its subcellular location is the cytoplasm. It is found in the cytosol. It localises to the perinuclear region. The protein localises to the cytoskeleton. The protein resides in the microtubule organizing center. Its subcellular location is the centrosome. In terms of biological role, RNA-binding protein involved in modulation of mRNA transcription by Polymerase II. Component of the tRNA-splicing ligase complex. In Xenopus laevis (African clawed frog), this protein is RNA transcription, translation and transport factor protein.